Reading from the N-terminus, the 323-residue chain is Homoserine kinase (323 aa).

Pro97 to Ala107 provides a ligand contact to ATP.

It belongs to the GHMP kinase family. Homoserine kinase subfamily.

It localises to the cytoplasm. It catalyses the reaction L-homoserine + ATP = O-phospho-L-homoserine + ADP + H(+). The protein operates within amino-acid biosynthesis; L-threonine biosynthesis; L-threonine from L-aspartate: step 4/5. Functionally, catalyzes the ATP-dependent phosphorylation of L-homoserine to L-homoserine phosphate. This Leifsonia xyli subsp. xyli (strain CTCB07) protein is Homoserine kinase.